Here is a 61-residue protein sequence, read N- to C-terminus: Large ribosomal subunit protein uL30 (61 aa).

The protein belongs to the universal ribosomal protein uL30 family. In terms of assembly, part of the 50S ribosomal subunit.

In Corynebacterium urealyticum (strain ATCC 43042 / DSM 7109), this protein is Large ribosomal subunit protein uL30.